We begin with the raw amino-acid sequence, 496 residues long: Cytochrome P450 71B14 (496 aa).

The helical transmembrane segment at 1–21 (MIWWFIVGASFFFAFILIAKD) threads the bilayer. Residue C436 coordinates heme.

Belongs to the cytochrome P450 family. Heme serves as cofactor.

Its subcellular location is the membrane. The chain is Cytochrome P450 71B14 (CYP71B14) from Arabidopsis thaliana (Mouse-ear cress).